The primary structure comprises 123 residues: WAP four-disulfide core domain protein 5 (123 aa).

A signal peptide spans 1-24 (MRIQSLLLLGALLAVGSQLPAVFG). 2 WAP domains span residues 27–73 (KGEK…CIPR) and 74–121 (VSVK…RDPA). Disulfide bonds link Cys34-Cys62, Cys41-Cys66, Cys49-Cys61, Cys55-Cys70, Cys81-Cys109, Cys88-Cys113, Cys96-Cys108, and Cys102-Cys117.

It localises to the secreted. Functionally, putative acid-stable proteinase inhibitor. In Macaca mulatta (Rhesus macaque), this protein is WAP four-disulfide core domain protein 5 (WFDC5).